A 487-amino-acid polypeptide reads, in one-letter code: Serine/threonine-protein kinase 4 (487 aa).

Residue M1 is modified to N-acetylmethionine. The residue at position 3 (T3) is a Phosphothreonine. The region spanning F30–V281 is the Protein kinase domain. ATP is bound by residues L36–V44 and K59. The active-site Proton acceptor is the D149. At T183 the chain carries Phosphothreonine; by autocatalysis. Position 265 is a phosphoserine (S265). A coiled-coil region spans residues L290 to R310. A compositionally biased stretch (basic and acidic residues) spans K303–V312. The interval K303 to R332 is disordered. A compositionally biased stretch (acidic residues) spans D313–D326. Phosphoserine is present on S320. Phosphothreonine is present on residues T340 and T367. T387 is modified (phosphothreonine; by PKB/AKT1). A phosphoserine mark is found at S410 and S414. A Phosphotyrosine modification is found at Y433. The region spanning Y433–K480 is the SARAH domain.

This sequence belongs to the protein kinase superfamily. STE Ser/Thr protein kinase family. STE20 subfamily. Homodimer; mediated via the coiled-coil region. Interacts with NORE1, which inhibits autoactivation. Interacts with and stabilizes SAV1. Interacts with RASSF1. Interacts with FOXO3. Interacts with RASSF2 (via SARAH domain). Interacts with AR, PKB/AKT1, TNNI3 and SIRT1. Interacts with DLG5 (via PDZ domain 3). Interacts with MARK3 and SCRIB in the presence of DLG5. Mg(2+) serves as cofactor. Post-translationally, autophosphorylated on serine and threonine residues. Phosphorylation at Thr-387 by PKB/AKT1, leads to inhibition of its: kinase activity, nuclear translocation and autophosphorylation at Thr-183. It also diminishes its cleavage by caspases and its ability to phosphorylate FOXO3. Proteolytically cleaved by caspase-3 during apoptosis at Asp-326 and Asp-349 resulting in a 37 kDa or a 39 kDa subunit respectively. The 39 kDa subunit is further cleaved into the 37 kDa form. Proteolytic cleavage results in kinase activation and nuclear translocation of the truncated form (MST1/N). It is less likely that cleavage at Asp-349 is a prerequisite for activation as this site is not conserved in the murine ortholog.

Its subcellular location is the cytoplasm. It localises to the nucleus. It catalyses the reaction L-seryl-[protein] + ATP = O-phospho-L-seryl-[protein] + ADP + H(+). The enzyme catalyses L-threonyl-[protein] + ATP = O-phospho-L-threonyl-[protein] + ADP + H(+). With respect to regulation, inhibited by the C-terminal non-catalytic region. Activated by caspase-cleavage. Full activation also requires homodimerization and autophosphorylation of Thr-183. Activated by RASSF1 which acts by preventing its dephosphorylation. Stress-activated, pro-apoptotic kinase which, following caspase-cleavage, enters the nucleus and induces chromatin condensation followed by internucleosomal DNA fragmentation. Key component of the Hippo signaling pathway which plays a pivotal role in organ size control and tumor suppression by restricting proliferation and promoting apoptosis. The core of this pathway is composed of a kinase cascade wherein STK3/MST2 and STK4/MST1, in complex with its regulatory protein SAV1, phosphorylates and activates LATS1/2 in complex with its regulatory protein MOB1, which in turn phosphorylates and inactivates YAP1 oncoprotein and WWTR1/TAZ. Phosphorylation of YAP1 by LATS2 inhibits its translocation into the nucleus to regulate cellular genes important for cell proliferation, cell death, and cell migration. STK3/MST2 and STK4/MST1 are required to repress proliferation of mature hepatocytes, to prevent activation of facultative adult liver stem cells (oval cells), and to inhibit tumor formation. Phosphorylates 'Ser-14' of histone H2B (H2BS14ph) during apoptosis. Phosphorylates FOXO3 upon oxidative stress, which results in its nuclear translocation and cell death initiation. Phosphorylates MOBKL1A, MOBKL1B and RASSF2. Phosphorylates TNNI3 (cardiac Tn-I) and alters its binding affinity to TNNC1 (cardiac Tn-C) and TNNT2 (cardiac Tn-T). Phosphorylates FOXO1 on 'Ser-212' and regulates its activation and stimulates transcription of PMAIP1 in a FOXO1-dependent manner. Phosphorylates SIRT1 and inhibits SIRT1-mediated p53/TP53 deacetylation, thereby promoting p53/TP53 dependent transcription and apoptosis upon DNA damage. Acts as an inhibitor of PKB/AKT1. Phosphorylates AR on 'Ser-650' and suppresses its activity by intersecting with PKB/AKT1 signaling and antagonizing formation of AR-chromatin complexes. The polypeptide is Serine/threonine-protein kinase 4 (STK4) (Aotus nancymaae (Ma's night monkey)).